A 206-amino-acid polypeptide reads, in one-letter code: Protease (206 aa).

Active-site residues include His55, Asp72, and Cys122.

The protein belongs to the peptidase C5 family. In terms of assembly, interacts with protease cofactor pVI-C; this interaction is necessary for protease activation.

The protein localises to the virion. Its subcellular location is the host nucleus. The enzyme catalyses Cleaves proteins of the adenovirus and its host cell at two consensus sites: -Yaa-Xaa-Gly-Gly-|-Xaa- and -Yaa-Xaa-Gly-Xaa-|-Gly- (in which Yaa is Met, Ile or Leu, and Xaa is any amino acid).. Requires DNA and protease cofactor for maximal activation. Inside nascent virions, becomes partially activated by binding to the viral DNA, allowing it to cleave the cofactor that binds to the protease and fully activates it. Actin, like the viral protease cofactor, seems to act as a cofactor in the cleavage of cytokeratin 18 and of actin itself. Functionally, cleaves viral precursor proteins (pTP, pIIIa, pVI, pVII, pVIII, and pX) inside newly assembled particles giving rise to mature virions. Protease complexed to its cofactor slides along the viral DNA to specifically locate and cleave the viral precursors. Mature virions have a weakened organization compared to the unmature virions, thereby facilitating subsequent uncoating. Without maturation, the particle lacks infectivity and is unable to uncoat. Late in adenovirus infection, in the cytoplasm, may participate in the cytoskeleton destruction. Cleaves host cell cytoskeletal keratins K7 and K18. The chain is Protease from Fowl adenovirus A serotype 1 (strain CELO / Phelps) (FAdV-1).